Consider the following 243-residue polypeptide: GrpE protein homolog, mitochondrial (243 aa).

A disordered region spans residues 42–75; sequence TEASKKEGKEDKAEAQGSQEPETAAETNKEAEGA. Positions 44 to 55 are enriched in basic and acidic residues; sequence ASKKEGKEDKAE.

It belongs to the GrpE family. In terms of assembly, component of the PAM complex, at least composed of mtHsp70, MGE1, TIM44, PAM16, PAM17 and PAM18.

The protein localises to the mitochondrion matrix. Its function is as follows. Essential component of the PAM complex, a complex required for the translocation of transit peptide-containing proteins from the inner membrane into the mitochondrial matrix in an ATP-dependent manner. Seems to control the nucleotide-dependent binding of SSC1 to substrate proteins. The protein is GrpE protein homolog, mitochondrial (mge1) of Debaryomyces hansenii (strain ATCC 36239 / CBS 767 / BCRC 21394 / JCM 1990 / NBRC 0083 / IGC 2968) (Yeast).